The sequence spans 110 residues: U32-theraphotoxin-Cg1a (110 aa).

The N-terminal stretch at 1–19 is a signal peptide; it reads MKHCFLILFTLIVFTVVWS. The propeptide occupies 20-43; the sequence is LEENEEYPDEDEMIESFMDGYSYR. 4 disulfides stabilise this stretch: cysteine 49/cysteine 63, cysteine 56/cysteine 69, cysteine 60/cysteine 105, and cysteine 62/cysteine 80.

Belongs to the neurotoxin 03 (Tx2) family. 02 subfamily. In terms of tissue distribution, expressed by the venom gland.

It localises to the secreted. Its function is as follows. Probable ion channel inhibitor. This chain is U32-theraphotoxin-Cg1a, found in Chilobrachys guangxiensis (Chinese earth tiger tarantula).